The sequence spans 827 residues: MEEIEEGSSNNSIRRVGTGSSDRRWVDGSEVDSETPLFSEIRDRDYSFGNLRRRLMKKPKRADSLDVEAMEIAGSHGHNLKDLSLLTTLGIAFQTLGVVYGDMGTSPLYVFSDVFSKVPIRSEVDVLGALSLVIYTIAVIPLAKYVFVVLKANDNGEGGTFALYSLICRYAKVNKLPNQQPADEQISSFRLKLPTPELERALGIKEALETKGYLKTLLLLLVLMGTSMIIGDGILTPAMSVMSAMSGLQGEVKGFGTNALVMSSIVILVALFSIQRFGTGKVGFLFAPVLALWFFSLGAIGIYNLLKYDFTVIRALNPFYIVLFFNKNSKQAWSALGGCVLCITGAEAMFADLGHFSVRSIQMAFTCVVFPCLLLAYMGQAAYLTKHPEASARIFYDSVPKSLFWPVFVIATLAAMIASQAMISATFSCVKQAMALGCFPRLKIIHTSKKRIGQIYIPVINWFLMIMCILVVSIFRSTTHIANAYGIAEVGVMMVSTVLVTLVMLLIWQTNIFLALCFPLIFGSVETIYLLAVLTKILEGGWVPLVFATFFLTVMYIWNYGSVLKYQSEVRERISMDFMRELGSTLGTIRIPGIGLLYNELVQGIPSIFGQFLLTLPAIHSTIIFVCIKYVPVPVVPQEERFLFRRVCPKDYHMFRCIARYGYKDVRKEDSRVFEQLLIESLEKFLRCEALEDALESTLNDFDPDRVSVASDTYTDDLMAPLIHRAKRSEPEQELDSEVLPSSSVGSSMEEDPALEYELAALREATDSGLTYLLAHGDVRAKKNSIFVKKLVINYFYAFLRRNCRAGAANLTVPHMNILQAGMTYMV.

Residues 1–31 (MEEIEEGSSNNSIRRVGTGSSDRRWVDGSEV) form a disordered region. The Cytoplasmic segment spans residues 1–82 (MEEIEEGSSN…AGSHGHNLKD (82 aa)). The helical transmembrane segment at 83 to 103 (LSLLTTLGIAFQTLGVVYGDM) threads the bilayer. Residues 104–129 (GTSPLYVFSDVFSKVPIRSEVDVLGA) lie on the Extracellular side of the membrane. A helical membrane pass occupies residues 130–150 (LSLVIYTIAVIPLAKYVFVVL). Over 151–216 (KANDNGEGGT…ALETKGYLKT (66 aa)) the chain is Cytoplasmic. The helical transmembrane segment at 217 to 237 (LLLLLVLMGTSMIIGDGILTP) threads the bilayer. Over 238–253 (AMSVMSAMSGLQGEVK) the chain is Extracellular. Residues 254 to 274 (GFGTNALVMSSIVILVALFSI) form a helical membrane-spanning segment. Residues 275–281 (QRFGTGK) lie on the Cytoplasmic side of the membrane. A helical membrane pass occupies residues 282 to 302 (VGFLFAPVLALWFFSLGAIGI). The Extracellular portion of the chain corresponds to 303–335 (YNLLKYDFTVIRALNPFYIVLFFNKNSKQAWSA). The helical transmembrane segment at 336–356 (LGGCVLCITGAEAMFADLGHF) threads the bilayer. Over 357–363 (SVRSIQM) the chain is Cytoplasmic. Residues 364 to 384 (AFTCVVFPCLLLAYMGQAAYL) form a helical membrane-spanning segment. At 385–402 (TKHPEASARIFYDSVPKS) the chain is on the extracellular side. The helical transmembrane segment at 403 to 423 (LFWPVFVIATLAAMIASQAMI) threads the bilayer. Topologically, residues 424-454 (SATFSCVKQAMALGCFPRLKIIHTSKKRIGQ) are cytoplasmic. Residues 455 to 475 (IYIPVINWFLMIMCILVVSIF) form a helical membrane-spanning segment. The Extracellular portion of the chain corresponds to 476 to 480 (RSTTH). The next 2 helical transmembrane spans lie at 481–501 (IANAYGIAEVGVMMVSTVLVT) and 502–522 (LVMLLIWQTNIFLALCFPLIF). The Extracellular segment spans residues 523–536 (GSVETIYLLAVLTK). Residues 537 to 557 (ILEGGWVPLVFATFFLTVMYI) form a helical membrane-spanning segment. The Cytoplasmic segment spans residues 558 to 827 (WNYGSVLKYQ…ILQAGMTYMV (270 aa)). The segment at 728–750 (RSEPEQELDSEVLPSSSVGSSME) is disordered. Low complexity predominate over residues 738–748 (EVLPSSSVGSS).

The protein belongs to the HAK/KUP transporter (TC 2.A.72.3) family.

It is found in the cell membrane. Functionally, putative potassium transporter. In Arabidopsis thaliana (Mouse-ear cress), this protein is Putative potassium transporter 12 (POT12).